A 632-amino-acid chain; its full sequence is 1-deoxy-D-xylulose-5-phosphate synthase (632 aa).

Residues histidine 72 and 113-115 (GHA) contribute to the thiamine diphosphate site. Aspartate 144 contacts Mg(2+). Thiamine diphosphate is bound by residues 145–146 (GA), asparagine 174, tyrosine 285, and glutamate 368. Residue asparagine 174 participates in Mg(2+) binding.

Belongs to the transketolase family. DXPS subfamily. As to quaternary structure, homodimer. Requires Mg(2+) as cofactor. It depends on thiamine diphosphate as a cofactor.

The catalysed reaction is D-glyceraldehyde 3-phosphate + pyruvate + H(+) = 1-deoxy-D-xylulose 5-phosphate + CO2. It functions in the pathway metabolic intermediate biosynthesis; 1-deoxy-D-xylulose 5-phosphate biosynthesis; 1-deoxy-D-xylulose 5-phosphate from D-glyceraldehyde 3-phosphate and pyruvate: step 1/1. Catalyzes the acyloin condensation reaction between C atoms 2 and 3 of pyruvate and glyceraldehyde 3-phosphate to yield 1-deoxy-D-xylulose-5-phosphate (DXP). The chain is 1-deoxy-D-xylulose-5-phosphate synthase from Cyanothece sp. (strain PCC 7425 / ATCC 29141).